The primary structure comprises 642 residues: Poly(A) polymerase beta (642 aa).

ATP contacts are provided by residues 101–103, threonine 110, 114–116, aspartate 168, lysine 229, tyrosine 238, and 247–248; these read FGS, DID, and GV. 3 residues coordinate Mg(2+): aspartate 114, aspartate 116, and aspartate 168. 2 disordered regions span residues 530 to 553 and 620 to 642; these read SENS…GNPQ and LVNH…ILGV. The span at 620-636 shows a compositional bias: polar residues; sequence LVNHPSRPSGNTATNIP.

It belongs to the poly(A) polymerase family. In terms of assembly, interacts with GSG1. Mg(2+) serves as cofactor. The cofactor is Mn(2+). Testis specific.

The protein localises to the cytoplasm. It localises to the nucleus. The enzyme catalyses RNA(n) + ATP = RNA(n)-3'-adenine ribonucleotide + diphosphate. The sequence is that of Poly(A) polymerase beta from Mus musculus (Mouse).